We begin with the raw amino-acid sequence, 579 residues long: Nif-specific regulatory protein (579 aa).

A GAF domain is found at 40-187; it reads DPVAEVPQIF…MVASLLEQAL (148 aa). The region spanning 226–454 is the Sigma-54 factor interaction domain; that stretch reads IVGSSPAIAE…LENCVNRAAA (229 aa). ATP contacts are provided by residues 254–261 and 317–326; these read GESGTGKE and ADGGTLFLDE. The segment at 464–536 is inter-domain linker; it reads EELACRQGAC…PLRTKTAQLS (73 aa). The a divalent metal cation site is built by C468 and C473. The tract at residues 502–529 is disordered; sequence RVSAPPPEPAPAPEPAPEAPPREEVPLR. 7 tandem repeats follow at residues 505-506, 507-508, 509-510, 511-512, 513-514, 515-516, and 517-518. The segment at 505 to 518 is 7 X 2 AA tandem repeats of X-P; that stretch reads APPPEPAPAPEPAP. Residues 505-520 show a composition bias toward pro residues; sequence APPPEPAPAPEPAPEA. The interval 537–579 is C-terminal DNA-binding domain; it reads REELLRALESAGWVQAKAARLLGMTPRQIAYALQKFEIELRKI. The H-T-H motif DNA-binding region spans 551–570; that stretch reads QAKAARLLGMTPRQIAYALQ.

In terms of assembly, interacts with sigma-54.

Required for activation of most nif operons, which are directly involved in nitrogen fixation. The chain is Nif-specific regulatory protein (nifA1) from Rhodobacter capsulatus (Rhodopseudomonas capsulata).